The sequence spans 156 residues: Ribosomal RNA large subunit methyltransferase H (156 aa).

Residues L73, G104, and 123–128 (LSSLTL) each bind S-adenosyl-L-methionine.

This sequence belongs to the RNA methyltransferase RlmH family. Homodimer.

The protein localises to the cytoplasm. It carries out the reaction pseudouridine(1915) in 23S rRNA + S-adenosyl-L-methionine = N(3)-methylpseudouridine(1915) in 23S rRNA + S-adenosyl-L-homocysteine + H(+). Specifically methylates the pseudouridine at position 1915 (m3Psi1915) in 23S rRNA. This Neisseria meningitidis serogroup C / serotype 2a (strain ATCC 700532 / DSM 15464 / FAM18) protein is Ribosomal RNA large subunit methyltransferase H.